A 617-amino-acid polypeptide reads, in one-letter code: Leucine aminopeptidase 2 (617 aa).

A peptide-binding positions include 139–141 and 271–276; these read QCQ and PYGGME. His-300 is a binding site for Zn(2+). The active-site Proton acceptor is Glu-301. Positions 304 and 323 each coordinate Zn(2+). Tyr-388 functions as the Proton donor in the catalytic mechanism.

It belongs to the peptidase M1 family. Zn(2+) is required as a cofactor.

It is found in the cytoplasm. The protein resides in the nucleus. The enzyme catalyses an epoxide + H2O = an ethanediol. Functionally, aminopeptidase that preferentially cleaves di- and tripeptides. Also has low epoxide hydrolase activity (in vitro). Can hydrolyze the epoxide leukotriene LTA(4) but it forms preferentially 5,6-dihydroxy-7,9,11,14-eicosatetraenoic acid rather than the cytokine leukotriene B(4) as the product compared to the homologous mammalian enzyme (in vitro). This is Leucine aminopeptidase 2 from Aspergillus terreus (strain NIH 2624 / FGSC A1156).